A 284-amino-acid polypeptide reads, in one-letter code: uncharacterized protein (284 aa).

N-linked (GlcNAc...) asparagine; by host glycans are attached at residues asparagine 79, asparagine 102, asparagine 111, asparagine 147, asparagine 162, asparagine 174, asparagine 196, asparagine 211, asparagine 228, and asparagine 234. The chain crosses the membrane as a helical span at residues 239–259; the sequence is AFTYGSWGVAMLLFAAVMVLV.

This sequence belongs to the RL11 family.

It is found in the membrane. This is an uncharacterized protein from Human cytomegalovirus (strain AD169) (HHV-5).